Reading from the N-terminus, the 250-residue chain is 3-deoxy-manno-octulosonate cytidylyltransferase (250 aa).

Belongs to the KdsB family.

The protein localises to the cytoplasm. The enzyme catalyses 3-deoxy-alpha-D-manno-oct-2-ulosonate + CTP = CMP-3-deoxy-beta-D-manno-octulosonate + diphosphate. It participates in nucleotide-sugar biosynthesis; CMP-3-deoxy-D-manno-octulosonate biosynthesis; CMP-3-deoxy-D-manno-octulosonate from 3-deoxy-D-manno-octulosonate and CTP: step 1/1. It functions in the pathway bacterial outer membrane biogenesis; lipopolysaccharide biosynthesis. Activates KDO (a required 8-carbon sugar) for incorporation into bacterial lipopolysaccharide in Gram-negative bacteria. The polypeptide is 3-deoxy-manno-octulosonate cytidylyltransferase (Janthinobacterium sp. (strain Marseille) (Minibacterium massiliensis)).